We begin with the raw amino-acid sequence, 235 residues long: Protein GrpE (235 aa).

A compositionally biased stretch (polar residues) spans 1–18 (MTDGNQKPDGNSGEQVTV). Disordered regions lie at residues 1-50 (MTDG…DAAH) and 198-235 (ESVD…PSGS). Residues 19 to 35 (TDKRRIDPETGEVRHVP) are compositionally biased toward basic and acidic residues.

Belongs to the GrpE family. As to quaternary structure, homodimer.

Its subcellular location is the cytoplasm. Participates actively in the response to hyperosmotic and heat shock by preventing the aggregation of stress-denatured proteins, in association with DnaK and GrpE. It is the nucleotide exchange factor for DnaK and may function as a thermosensor. Unfolded proteins bind initially to DnaJ; upon interaction with the DnaJ-bound protein, DnaK hydrolyzes its bound ATP, resulting in the formation of a stable complex. GrpE releases ADP from DnaK; ATP binding to DnaK triggers the release of the substrate protein, thus completing the reaction cycle. Several rounds of ATP-dependent interactions between DnaJ, DnaK and GrpE are required for fully efficient folding. The protein is Protein GrpE of Mycobacterium bovis (strain BCG / Pasteur 1173P2).